The chain runs to 499 residues: Serine/threonine-protein kinase RHS3 (499 aa).

Residues 1 to 92 (MLLKPGNKLV…NSSKPHTGGD (92 aa)) form a disordered region. The span at 39–55 (QKQVEQNTKKIEEHQIK) shows a compositional bias: basic and acidic residues. The span at 63-85 (SNHNVNMSSQSNNSESTSTNNSS) shows a compositional bias: low complexity. The region spanning 113 to 436 (FRVLKRLGYG…ATEIKQHPFF (324 aa)) is the Protein kinase domain. Residues 119–127 (LGYGDIGSV) and Lys144 contribute to the ATP site. The active-site Proton acceptor is the Asp240. In terms of domain architecture, AGC-kinase C-terminal spans 437–499 (EGVNWALIRG…DPDYIVFEYF (63 aa)).

Belongs to the protein kinase superfamily. AGC Ser/Thr protein kinase family. Interacts with PDPK1/PDK1. In terms of processing, autophosphorylated and phosphorylated by PDPK1/PDK1. In terms of tissue distribution, specifically expressed in root hair cells.

The catalysed reaction is L-seryl-[protein] + ATP = O-phospho-L-seryl-[protein] + ADP + H(+). It catalyses the reaction L-threonyl-[protein] + ATP = O-phospho-L-threonyl-[protein] + ADP + H(+). Its activity is regulated as follows. Activated by PDPK1/PDK1. In terms of biological role, involved in root hair growth and morphogenesis. This Arabidopsis thaliana (Mouse-ear cress) protein is Serine/threonine-protein kinase RHS3.